The following is a 402-amino-acid chain: Tol-Pal system protein TolB (402 aa).

Positions 1 to 17 (MKKIVAIFLVFLGSLWA) are cleaved as a signal peptide.

The protein belongs to the TolB family. The Tol-Pal system is composed of five core proteins: the inner membrane proteins TolA, TolQ and TolR, the periplasmic protein TolB and the outer membrane protein Pal. They form a network linking the inner and outer membranes and the peptidoglycan layer.

It is found in the periplasm. Part of the Tol-Pal system, which plays a role in outer membrane invagination during cell division and is important for maintaining outer membrane integrity. The sequence is that of Tol-Pal system protein TolB from Campylobacter jejuni (strain RM1221).